The primary structure comprises 91 residues: Small ribosomal subunit protein uS19 (91 aa).

It belongs to the universal ribosomal protein uS19 family.

Its function is as follows. Protein S19 forms a complex with S13 that binds strongly to the 16S ribosomal RNA. This chain is Small ribosomal subunit protein uS19, found in Bordetella petrii (strain ATCC BAA-461 / DSM 12804 / CCUG 43448).